The following is a 95-amino-acid chain: MSKDSKMRATINQKLTEMGERERLKELLRAKLTECGWRDQLKAHCKDVIKEKGLEHVTVEDLVVEITPKGRVLVPDSVKKELLQRIRAFLAQHAT.

Belongs to the ENY2 family. Component of the nuclear pore complex (NPC)-associated TREX-2 complex (transcription and export complex 2). Component of the SAGA transcription coactivator-HAT complex. Within the SAGA complex, participates in a subcomplex of SAGA called the DUB module (deubiquitination module).

The protein localises to the nucleus. Its subcellular location is the nucleoplasm. Its function is as follows. Involved in mRNA export coupled transcription activation by association with both the TREX-2 and the SAGA complexes. The transcription regulatory histone acetylation (HAT) complex SAGA is a multiprotein complex that activates transcription by remodeling chromatin and mediating histone acetylation and deubiquitination. Within the SAGA complex, participates in a subcomplex that specifically deubiquitinates histones. The SAGA complex is recruited to specific gene promoters by activators, where it is required for transcription. The TREX-2 complex functions in docking export-competent ribonucleoprotein particles (mRNPs) to the nuclear entrance of the nuclear pore complex (nuclear basket). TREX-2 participates in mRNA export and accurate chromatin positioning in the nucleus by tethering genes to the nuclear periphery. This Salmo salar (Atlantic salmon) protein is Transcription and mRNA export factor ENY2-2 (eny2-2).